The primary structure comprises 229 residues: MAAILARKSLSALRSRQLVLAGHTIEGTNGYNRTLLGTRSFATKHSFSTDKDDEEREQLAKELSKDWNSVFERSINTLFLTEMVRGLMLTLKYFFEKKVTINYPFEKGPLSPRFRGEHALRRYATGEERCIACKLCEAICPAQAITIEAEEREDGSRRTTRYDIDMTKCIYCGFCQEACPVDAIVEGPNFEFATETHEELLYDKEKLLENGDRWETEIAENLRSESLYR.

The transit peptide at 1–41 (MAAILARKSLSALRSRQLVLAGHTIEGTNGYNRTLLGTRSF) directs the protein to the mitochondrion. 4Fe-4S ferredoxin-type domains lie at 121-150 (RRYATGEERCIACKLCEAICPAQAITIEAE) and 160-189 (TRYDIDMTKCIYCGFCQEACPVDAIVEGPN). 8 residues coordinate [4Fe-4S] cluster: C130, C133, C136, C140, C169, C172, C175, and C179.

This sequence belongs to the complex I 23 kDa subunit family. Complex I is composed of about 45 different subunits. This is a component of the iron-sulfur (IP) fragment of the enzyme. [4Fe-4S] cluster serves as cofactor. In terms of tissue distribution, lowest expression found in storage tissues of tubers. Higher expression in older leaves than younger ones. Highest expression found in flowers.

It localises to the mitochondrion inner membrane. It carries out the reaction a ubiquinone + NADH + 5 H(+)(in) = a ubiquinol + NAD(+) + 4 H(+)(out). In terms of biological role, core subunit of the mitochondrial membrane respiratory chain NADH dehydrogenase (Complex I) that is believed to belong to the minimal assembly required for catalysis. Complex I functions in the transfer of electrons from NADH to the respiratory chain. The immediate electron acceptor for the enzyme is believed to be ubiquinone. May donate electrons to ubiquinone. The polypeptide is NADH dehydrogenase [ubiquinone] iron-sulfur protein 8, mitochondrial (Solanum tuberosum (Potato)).